The sequence spans 245 residues: Transcription factor FUP7 (245 aa).

The segment at residues Cys10–Cys37 is a DNA-binding region (zn(2)-C6 fungal-type). Residues Glu162–Gln216 are disordered. Positions Gln199–Asn214 are enriched in polar residues.

It localises to the nucleus. In terms of biological role, transcription factor; part of the gene cluster that mediates the biosynthesis of the mycotoxin fusaproliferin (FUP) that belongs to the class of bicyclic sesterterpenoids. The protein is Transcription factor FUP7 of Fusarium proliferatum (strain ET1) (Orchid endophyte fungus).